The primary structure comprises 1165 residues: MAAARNATNNDKTLKNGRDVSRLSFAKITDTLTVPDLLALQTESFDWLVGNDAWQARVAAAEAQGRQDLPAATGLEEIFEEISPIEDLGETMQLSFTNPFLEEKKYSIDECKEKGRTYAAPLYVEAEFMNHLTGEIKTQTVFMGDFPLMTERGTFIINGTERVVVSQLVRSPGVYFEAAADKTSDKDIYSARVIPSRGSWLEFEIDKRDQVGVRIDRKRKQSVTVFLKALGLTSEEILAEFAGFQSIELTLEKDAILTKEEALKDIYRKLRPGEQVAAEAARALLDNFYFNPKRYDLAKVGRYKINRKLGLEAPLTDSVLTVQDIIATIKYLVSLHDGQTSFTGLRSGVETDIRLDIDDIDHFGNRRIRAVGELIQNQVRTGLSRMERVVRERMTTQDIEAITPQTLINVRPVVAAIKEFFGTSQLSQFMDQNNPLAGLTHKRRLSALGPGGLSRERAGVEVRDVHPSHYGRMCPIETPEGPNIGLIGSLASFARINSFGFIETPYRKVVDGLVTDQIDYLTASEEDDFVVAQANAPLDARGHFVEERVLARQKGGEVDLVPAEEIGYMDVSPRQMVSVGTSLIPFLEHDDANRALMGANMQRQAVPLLRSESPVVGTGMEGYAAIDAGDVVIAEKSGIVSEVSADAVTVQADDGTVKTYYLRKFDRSNQGTSYNHRVVVDEGDRIEAGEVVADGPATENGELALGKNLLVAFMPWEGHNFEDAIILSQNLVKDDTLSSIHIEEYEVDARDTKLGKEEITRDLPNVSPDLLADLDERGIIRIGAEVRPGDILVGKVTPKGETELSAEERLLRAIFNEKSREVRDTSLKVPHGEEGTIIGVKVFDAQDGDDELGSGVNQRVVVYIAQKRKITAGDKLAGRHGNKGVISKILPVEDMPFLADGTPVDVILNPLGVPGRMNFGQVLEIHLGWIAKNGWEIKGKPKWAAELPETAFSAAPNTKVATPVFDGAKEEEIAGLLDVTLPTRDGDRLIGSSGKTQLFDGRSGEPYPDPVSVGYMYILKLHHLVDDKIHARSTGPYSMITQQPLGGKAQFGGQRFGEMEVWALEAYGAAYALQELLTIKSDDILGRVKVYEAIVKGENIQEPGIPESFKVLIKEMQSLCLNVEVLSADGQAVSLRDADDEAFRAAEELGINISSRFESSSIDEI.

It belongs to the RNA polymerase beta chain family. In terms of assembly, the RNAP catalytic core consists of 2 alpha, 1 beta, 1 beta' and 1 omega subunit. When a sigma factor is associated with the core the holoenzyme is formed, which can initiate transcription.

The catalysed reaction is RNA(n) + a ribonucleoside 5'-triphosphate = RNA(n+1) + diphosphate. DNA-dependent RNA polymerase catalyzes the transcription of DNA into RNA using the four ribonucleoside triphosphates as substrates. The chain is DNA-directed RNA polymerase subunit beta from Leifsonia xyli subsp. xyli (strain CTCB07).